The primary structure comprises 355 residues: tRNA pseudouridine synthase D (355 aa).

Residue aspartate 84 is the Nucleophile of the active site. A TRUD domain is found at 160–306 (GVPNYFGLQR…MAHERRILRL (147 aa)).

The protein belongs to the pseudouridine synthase TruD family.

It catalyses the reaction uridine(13) in tRNA = pseudouridine(13) in tRNA. Its function is as follows. Responsible for synthesis of pseudouridine from uracil-13 in transfer RNAs. The sequence is that of tRNA pseudouridine synthase D from Pseudomonas aeruginosa (strain ATCC 15692 / DSM 22644 / CIP 104116 / JCM 14847 / LMG 12228 / 1C / PRS 101 / PAO1).